The following is a 168-amino-acid chain: RNA pyrophosphohydrolase (168 aa).

The Nudix hydrolase domain maps to 8–159 (PYRTCVGVML…KRPVYERVVK (152 aa)). The short motif at 47–68 (GGVDPGEDTWKAAKRELYEETS) is the Nudix box element.

The protein belongs to the Nudix hydrolase family. RppH subfamily. A divalent metal cation serves as cofactor.

Functionally, accelerates the degradation of transcripts by removing pyrophosphate from the 5'-end of triphosphorylated RNA, leading to a more labile monophosphorylated state that can stimulate subsequent ribonuclease cleavage. This is RNA pyrophosphohydrolase from Rhodopseudomonas palustris (strain ATCC BAA-98 / CGA009).